We begin with the raw amino-acid sequence, 141 residues long: Endoribonuclease YbeY (141 aa).

Zn(2+) is bound by residues histidine 107, histidine 111, and histidine 117.

Belongs to the endoribonuclease YbeY family. Zn(2+) is required as a cofactor.

The protein localises to the cytoplasm. Functionally, single strand-specific metallo-endoribonuclease involved in late-stage 70S ribosome quality control and in maturation of the 3' terminus of the 16S rRNA. This is Endoribonuclease YbeY from Leptospira interrogans serogroup Icterohaemorrhagiae serovar Lai (strain 56601).